The following is a 201-amino-acid chain: Superoxide dismutase [Mn] (201 aa).

The Mn(2+) site is built by His-27, His-81, Asp-163, and His-167.

Belongs to the iron/manganese superoxide dismutase family. Homodimer. Requires Mn(2+) as cofactor.

It catalyses the reaction 2 superoxide + 2 H(+) = H2O2 + O2. Functionally, destroys superoxide anion radicals which are normally produced within the cells and which are toxic to biological systems. May play a critical role against oxidative stress, affecting both the survival and the virulence of S.pneumoniae. This Streptococcus pneumoniae serotype 4 (strain ATCC BAA-334 / TIGR4) protein is Superoxide dismutase [Mn] (sodA).